The primary structure comprises 308 residues: uncharacterized protein (308 aa).

Glutamate 59 is an active-site residue.

Belongs to the PhzF family.

This is an uncharacterized protein from Deinococcus radiodurans (strain ATCC 13939 / DSM 20539 / JCM 16871 / CCUG 27074 / LMG 4051 / NBRC 15346 / NCIMB 9279 / VKM B-1422 / R1).